The sequence spans 384 residues: Autophagy-related protein 25 (384 aa).

Coiled-coil stretches lie at residues 132–236 (KETA…RRAS) and 342–379 (KKNNQTDKDQEIASLRNRLSEMEQNYERVLATMEQWKT). Positions 224–247 (ESRLSNMNKRRASPRDDAEAEPKR) are disordered. Basic and acidic residues predominate over residues 236 to 247 (SPRDDAEAEPKR).

The protein belongs to the ADIP family.

The protein localises to the preautophagosomal structure membrane. Functionally, specifically required for selective degradation of peroxisomes via macropexophagy. This chain is Autophagy-related protein 25 (ATG25), found in Pichia angusta (Yeast).